A 685-amino-acid polypeptide reads, in one-letter code: Stromal interaction molecule 1 (685 aa).

Positions 1-22 (MDVCARLALWLLWGLLLHQGQS) are cleaved as a signal peptide. The Extracellular segment spans residues 23–213 (LSHSHSEKNT…LLTRHNHLKD (191 aa)). Positions 24–43 (SHSHSEKNTGASSGATSEES) are disordered. A compositionally biased stretch (low complexity) spans 32–41 (TGASSGATSE). EF-hand domains follow at residues 64 to 97 (SFEA…EDLN) and 102 to 126 (TVKH…AWKA). Ca(2+)-binding residues include Asp76, Asp78, Asn80, Asp82, and Glu87. Residues Asn131 and Asn171 are each glycosylated (N-linked (GlcNAc...) asparagine). Positions 132-200 (WTVDEVIQWL…QLKALDTVLF (69 aa)) constitute an SAM domain. The chain crosses the membrane as a helical span at residues 214 to 234 (FMLVVSIVIGVGGCWFAYIQN). Residues 235–685 (RYSKEHMKKM…LKIFKKPLKK (451 aa)) lie on the Cytoplasmic side of the membrane. A coiled-coil region spans residues 248–442 (LEGLHRAEQS…IEILCGFQIV (195 aa)). Ser257 is modified (phosphoserine). The interval 344-442 (PEALQKWLQL…IEILCGFQIV (99 aa)) is SOAR/CAD. The interval 475 to 483 (DDVDDMDEE) is contributes to fast Ca(2+)-dependent inactivation of CRAC channels. A compositionally biased stretch (low complexity) spans 490–499 (MQSPSLQSSV). Residues 490–542 (MQSPSLQSSVRQRLTEPQHGLGSQRDLTHSDSESSLHTSDRQRVAPKPPQMGR) form a disordered region. Thr504 is subject to Phosphothreonine. A Phosphoserine modification is found at Ser512. Residues 515–532 (DLTHSDSESSLHTSDRQR) are compositionally biased toward basic and acidic residues. Thr517 bears the Phosphothreonine mark. Phosphoserine occurs at positions 519, 521, 523, 524, 567, 575, 602, 608, 618, 621, and 628. The segment at 596-685 (LMELNPSVPP…LKIFKKPLKK (90 aa)) is disordered. Over residues 608 to 620 (SPLLDSSHSHSPS) the composition is skewed to low complexity. A Microtubule tip localization signal motif is present at residues 642 to 645 (TRIP). The segment covering 655-666 (EEDNGSIGEETD) has biased composition (acidic residues). Ser660 is subject to Phosphoserine. Residue Thr665 is modified to Phosphothreonine. Ser668 carries the post-translational modification Phosphoserine. The span at 670 to 685 (GRKKFPLKIFKKPLKK) shows a compositional bias: basic residues. The tract at residues 672-685 (KKFPLKIFKKPLKK) is required for generation of inwardly rectifying CRAC currents.

Monomer in the presence of Ca(2+). It oligomerizes in absence of Ca(2+). Forms homooligomers and heterooligomers with STIM2. Interacts with pore-forming subunits of CRAC channels, ORAI1, ORAI2 and ORAI3; this interaction is potentiated upon Ca(2+) store depletion. Interacts (via the transmembrane region and the SOAR/CAD domain) with SPPL3; the interaction promotes the binding of STIM1 to ORAI1. Interacts with ORAI1. Interacts with MAPRE1; probably required for targeting to the growing microtubule plus ends. Interacts with CRACR2A/EFCAB4B; the interaction is direct and takes place in absence of Ca(2+). Forms a complex with CRACR2A/EFCAB4B and ORAI1 at low concentration of Ca(2+), the complex dissociates at elevated Ca(2+) concentrations. Interacts with SARAF, promoting a slow inactivation of STIM1-dependent SOCE activity, possibly by facilitating the deoligomerization of STIM1. Interacts with EFHB; the interaction takes place upon Ca(2+)-store depletion and inhibits the association with SARAF. Interacts with ASPH. Interacts with SLC35G1; intracellular Ca(2+)-dependent. May interact with ATP1A1, ATP2A2, ATP2B1, ATP2B4, KPNB1 and XPO1; through SLC35G1. Interacts with TMEM203. Interacts with STIMATE, promoting STIM1 conformational switch. Interacts with TMEM178A. Interacts with CASQ1 (via C-terminal end and preferentially with the monomeric form); this interaction increases in response to a depletion of intracellular Ca(2+), decreases both STIM1 aggregation and clustering, interaction of STIM1 with ORAI1 and store-operated Ca(2+) entry (SOCE) activity. Interacts with ADCY8. Post-translationally, glycosylation is required for cell surface expression. Phosphorylated predominantly on Ser residues.

Its subcellular location is the cell membrane. It localises to the endoplasmic reticulum membrane. The protein localises to the sarcoplasmic reticulum. It is found in the cytoplasm. The protein resides in the cytoskeleton. Its function is as follows. Acts as a Ca(2+) sensor that gates two major inward rectifying Ca(2+) channels at the plasma membrane: Ca(2+) release-activated Ca(2+) (CRAC) channels and arachidonate-regulated Ca(2+)-selective (ARC) channels. Plays a role in mediating store-operated Ca(2+) entry (SOCE), a Ca(2+) influx following depletion of intracellular Ca(2+) stores. Upon Ca(2+) depletion, translocates from the endoplasmic reticulum to the plasma membrane where it activates CRAC channel pore-forming subunits ORA1, ORA2 and ORAI3 to generate sustained and oscillatory Ca(2+) entry. Involved in enamel formation. The sequence is that of Stromal interaction molecule 1 from Rattus norvegicus (Rat).